The chain runs to 537 residues: Methylmalonate-semialdehyde/malonate-semialdehyde dehydrogenase [acylating], mitochondrial (537 aa).

The N-terminal 34 residues, 1–34, are a transit peptide targeting the mitochondrion; sequence MAAVAVAAAAAALRARILQVSSKVNSSWQPASSF. Lys49, Lys54, Lys57, and Lys78 each carry N6-acetyllysine; alternate. Residues Lys49, Lys54, Lys57, and Lys78 each carry the N6-succinyllysine; alternate modification. Lys89 bears the N6-acetyllysine mark. N6-acetyllysine; alternate occurs at positions 119 and 131. N6-succinyllysine; alternate is present on residues Lys119 and Lys131. Residues Ala185, Phe187, Lys211, Glu214, Arg215, and Ser264 each contribute to the NAD(+) site. Residue Ser264 is modified to Phosphoserine. Residue Lys300 is modified to N6-acetyllysine. The active-site Nucleophile is Cys319. An N6-acetyllysine mark is found at Lys332 and Lys333. N6-acetyllysine; alternate occurs at positions 366 and 378. 2 positions are modified to N6-succinyllysine; alternate: Lys366 and Lys378. A Phosphoserine modification is found at Ser382. Lys393 carries the N6-succinyllysine modification. Glu419 is a binding site for NAD(+). At Lys502 the chain carries N6-acetyllysine. N6-succinyllysine is present on Lys519.

It belongs to the aldehyde dehydrogenase family. Homodimer. The N-terminus is blocked.

The protein localises to the mitochondrion. The enzyme catalyses 2-methyl-3-oxopropanoate + NAD(+) + CoA + H2O = propanoyl-CoA + hydrogencarbonate + NADH + H(+). It catalyses the reaction 3-oxopropanoate + NAD(+) + CoA + H2O = hydrogencarbonate + acetyl-CoA + NADH + H(+). The catalysed reaction is (R)-2-methyl-3-oxopropanoate + NAD(+) + CoA + H2O = propanoyl-CoA + hydrogencarbonate + NADH + H(+). It carries out the reaction (S)-2-methyl-3-oxopropanoate + NAD(+) + CoA + H2O = propanoyl-CoA + hydrogencarbonate + NADH + H(+). In terms of biological role, malonate and methylmalonate semialdehyde dehydrogenase involved in the catabolism of valine, thymine, and compounds catabolized by way of beta-alanine, including uracil and cytidine. This is Methylmalonate-semialdehyde/malonate-semialdehyde dehydrogenase [acylating], mitochondrial (ALDH6A1) from Bos taurus (Bovine).